A 239-amino-acid chain; its full sequence is Orotidine 5'-phosphate decarboxylase (239 aa).

Residues D10, K32, 59–68, T122, R184, Q193, G213, and R214 each bind substrate; that span reads DLKLHDIPNT. The active-site Proton donor is the K61.

It belongs to the OMP decarboxylase family. Type 1 subfamily. Homodimer.

The enzyme catalyses orotidine 5'-phosphate + H(+) = UMP + CO2. It functions in the pathway pyrimidine metabolism; UMP biosynthesis via de novo pathway; UMP from orotate: step 2/2. Functionally, catalyzes the decarboxylation of orotidine 5'-monophosphate (OMP) to uridine 5'-monophosphate (UMP). This chain is Orotidine 5'-phosphate decarboxylase, found in Geobacillus sp. (strain WCH70).